Reading from the N-terminus, the 238-residue chain is ATP synthase subunit a (238 aa).

The next 5 membrane-spanning stretches (helical) occupy residues 17-37 (LSNILMITVTCVIVLLIAIIC), 75-95 (FHVLGITILMFVFVANMLGLP), 112-132 (DPIVTLTLAIMVLGLTHYYGI), 172-192 (YGNIFAGEVLLTIIATQLAHI), and 194-214 (IFVGVLAIIPAIIWQAFSLFI).

This sequence belongs to the ATPase A chain family. As to quaternary structure, F-type ATPases have 2 components, CF(1) - the catalytic core - and CF(0) - the membrane proton channel. CF(1) has five subunits: alpha(3), beta(3), gamma(1), delta(1), epsilon(1). CF(0) has three main subunits: a(1), b(2) and c(9-12). The alpha and beta chains form an alternating ring which encloses part of the gamma chain. CF(1) is attached to CF(0) by a central stalk formed by the gamma and epsilon chains, while a peripheral stalk is formed by the delta and b chains.

The protein localises to the cell membrane. In terms of biological role, key component of the proton channel; it plays a direct role in the translocation of protons across the membrane. This Listeria monocytogenes serovar 1/2a (strain ATCC BAA-679 / EGD-e) protein is ATP synthase subunit a.